Here is a 265-residue protein sequence, read N- to C-terminus: Ribosomal RNA small subunit methyltransferase A (265 aa).

Residues His-17, Leu-19, Gly-44, Glu-65, Asp-90, and Asn-112 each coordinate S-adenosyl-L-methionine.

This sequence belongs to the class I-like SAM-binding methyltransferase superfamily. rRNA adenine N(6)-methyltransferase family. RsmA subfamily.

It localises to the cytoplasm. The catalysed reaction is adenosine(1518)/adenosine(1519) in 16S rRNA + 4 S-adenosyl-L-methionine = N(6)-dimethyladenosine(1518)/N(6)-dimethyladenosine(1519) in 16S rRNA + 4 S-adenosyl-L-homocysteine + 4 H(+). Functionally, specifically dimethylates two adjacent adenosines (A1518 and A1519) in the loop of a conserved hairpin near the 3'-end of 16S rRNA in the 30S particle. May play a critical role in biogenesis of 30S subunits. The sequence is that of Ribosomal RNA small subunit methyltransferase A from Xylella fastidiosa (strain Temecula1 / ATCC 700964).